Consider the following 423-residue polypeptide: Histidine--tRNA ligase (423 aa).

This sequence belongs to the class-II aminoacyl-tRNA synthetase family. Homodimer.

Its subcellular location is the cytoplasm. The enzyme catalyses tRNA(His) + L-histidine + ATP = L-histidyl-tRNA(His) + AMP + diphosphate + H(+). In Bacillus cytotoxicus (strain DSM 22905 / CIP 110041 / 391-98 / NVH 391-98), this protein is Histidine--tRNA ligase.